A 212-amino-acid chain; its full sequence is ATP phosphoribosyltransferase (212 aa).

Belongs to the ATP phosphoribosyltransferase family. Short subfamily. As to quaternary structure, heteromultimer composed of HisG and HisZ subunits.

It is found in the cytoplasm. The enzyme catalyses 1-(5-phospho-beta-D-ribosyl)-ATP + diphosphate = 5-phospho-alpha-D-ribose 1-diphosphate + ATP. It participates in amino-acid biosynthesis; L-histidine biosynthesis; L-histidine from 5-phospho-alpha-D-ribose 1-diphosphate: step 1/9. In terms of biological role, catalyzes the condensation of ATP and 5-phosphoribose 1-diphosphate to form N'-(5'-phosphoribosyl)-ATP (PR-ATP). Has a crucial role in the pathway because the rate of histidine biosynthesis seems to be controlled primarily by regulation of HisG enzymatic activity. This chain is ATP phosphoribosyltransferase, found in Prochlorococcus marinus (strain MIT 9312).